The primary structure comprises 176 residues: Cytochrome c-552 (176 aa).

Residues 12 to 32 (GALIGSLLFLLLMSWAASGIF) traverse the membrane as a helical; Signal-anchor segment. Cysteine 90, cysteine 93, histidine 94, methionine 126, and methionine 154 together coordinate heme c.

Post-translationally, binds 1 heme c group covalently per subunit.

It localises to the cell membrane. In terms of biological role, mediates the electron transport between the cytochrome bc1 complex and cytochrome-c oxidase. This is Cytochrome c-552 (cycM) from Paracoccus denitrificans.